Consider the following 250-residue polypeptide: Small ribosomal subunit protein uS3 (250 aa).

One can recognise a KH type-2 domain in the interval V39–D107. Residues M215 to E250 are disordered. The span at A220–E250 shows a compositional bias: basic and acidic residues.

It belongs to the universal ribosomal protein uS3 family. In terms of assembly, part of the 30S ribosomal subunit. Forms a tight complex with proteins S10 and S14.

Functionally, binds the lower part of the 30S subunit head. Binds mRNA in the 70S ribosome, positioning it for translation. This chain is Small ribosomal subunit protein uS3, found in Acinetobacter baumannii (strain AB0057).